The primary structure comprises 392 residues: ATP phosphoribosyltransferase regulatory subunit (392 aa).

Belongs to the class-II aminoacyl-tRNA synthetase family. HisZ subfamily. Heteromultimer composed of HisG and HisZ subunits.

Its subcellular location is the cytoplasm. The protein operates within amino-acid biosynthesis; L-histidine biosynthesis; L-histidine from 5-phospho-alpha-D-ribose 1-diphosphate: step 1/9. In terms of biological role, required for the first step of histidine biosynthesis. May allow the feedback regulation of ATP phosphoribosyltransferase activity by histidine. This Synechococcus sp. (strain WH7803) protein is ATP phosphoribosyltransferase regulatory subunit.